Reading from the N-terminus, the 102-residue chain is Salivary thrombin inhibitor anophelin (102 aa).

The N-terminal stretch at M1–S21 is a signal peptide. A disordered region spans residues Y25 to H102. Over residues S59–Q69 the composition is skewed to polar residues. The blocks active site cleft of host thrombin in a reverse direction compared to substrates stretch occupies residues D70–R73. The segment covering Q80–P90 has biased composition (polar residues). The span at S91–H102 shows a compositional bias: low complexity.

It belongs to the anophelin family. As to quaternary structure, interacts with human F2 (thrombin); the interaction results in thrombin inhibition.

It localises to the secreted. Functionally, salivary protein with anticoagulant activity that inhibits host thrombin (F2). This is Salivary thrombin inhibitor anophelin from Anopheles funestus (African malaria mosquito).